The following is a 503-amino-acid chain: Discoidin, CUB and LCCL domain-containing protein 1 (503 aa).

The signal sequence occupies residues 1–25 (MGTGAGGPSVLALLFAVCAPLRLQA). Residues 26-250 (EELGDGCGHI…FTTPGMNITT (225 aa)) lie on the Extracellular side of the membrane. 4 cysteine pairs are disulfide-bonded: Cys32-Cys59, Cys85-Cys103, Cys149-Cys165, and Cys169-Cys191. The region spanning 32 to 141 (CGHIVTSQDS…RGFLLTYASS (110 aa)) is the CUB domain. The N-linked (GlcNAc...) asparagine glycan is linked to Asn55. Residues 143-239 (HPDLITCLER…RHGSLSEKRF (97 aa)) enclose the LCCL domain. A glycan (N-linked (GlcNAc...) asparagine) is linked at Asn247. A helical transmembrane segment spans residues 251–271 (VAIPSVIFIALLLTGMGIFAI). Over 272–503 (CRKRKKKGNP…LNQTAMTALL (232 aa)) the chain is Cytoplasmic. Ser305 is subject to Phosphoserine. At Thr406 the chain carries Phosphothreonine. The interval 410–503 (QSGYRVPGPR…LNQTAMTALL (94 aa)) is disordered. Residues 494-503 (LNQTAMTALL) show a composition bias toward polar residues.

The protein resides in the membrane. This chain is Discoidin, CUB and LCCL domain-containing protein 1 (Dcbld1), found in Mus musculus (Mouse).